The primary structure comprises 132 residues: Large ribosomal subunit protein uL22c (132 aa).

Belongs to the universal ribosomal protein uL22 family. Part of the 50S ribosomal subunit.

Its subcellular location is the plastid. It localises to the chloroplast. This protein binds specifically to 23S rRNA. Its function is as follows. The globular domain of the protein is located near the polypeptide exit tunnel on the outside of the subunit, while an extended beta-hairpin is found that lines the wall of the exit tunnel in the center of the 70S ribosome. This chain is Large ribosomal subunit protein uL22c (rpl22), found in Populus trichocarpa (Western balsam poplar).